The primary structure comprises 129 residues: MRHRKSGRQLNRNSSHRQAMFRNMASALVSHEIIKTTLPKAKELRRVVEPLITLAKEDSVANRRLAFARTRNVETVAKLFNELGPRFAQRAGGYTRILKCGFRAGDNAPMAYIELVDRPEVSTETATTE.

Belongs to the bacterial ribosomal protein bL17 family. As to quaternary structure, part of the 50S ribosomal subunit. Contacts protein L32.

The chain is Large ribosomal subunit protein bL17 from Actinobacillus succinogenes (strain ATCC 55618 / DSM 22257 / CCUG 43843 / 130Z).